A 285-amino-acid chain; its full sequence is Probable endonuclease 4 (285 aa).

Zn(2+) contacts are provided by His-69, His-109, Glu-145, Asp-179, His-182, His-216, Asp-229, His-231, and Glu-261.

The protein belongs to the AP endonuclease 2 family. Requires Zn(2+) as cofactor.

The enzyme catalyses Endonucleolytic cleavage to 5'-phosphooligonucleotide end-products.. Functionally, endonuclease IV plays a role in DNA repair. It cleaves phosphodiester bonds at apurinic or apyrimidinic (AP) sites, generating a 3'-hydroxyl group and a 5'-terminal sugar phosphate. The protein is Probable endonuclease 4 of Escherichia coli (strain SMS-3-5 / SECEC).